A 652-amino-acid polypeptide reads, in one-letter code: RNA-binding E3 ubiquitin-protein ligase MEX3C (652 aa).

2 disordered regions span residues 15 to 39 (AAPA…ELEG) and 80 to 136 (QARR…EDRP). A compositionally biased stretch (pro residues) spans 18–33 (APLPQPPPLPPPPPAG). The span at 101–134 (AELELEVDEEEGEEAELDGELLEEEELEEAEEED) shows a compositional bias: acidic residues. KH domains lie at 225-286 (TTEC…KREI) and 319-380 (QTTV…REEI). 2 disordered regions span residues 429 to 448 (ARMM…SGST) and 506 to 566 (FEPV…HVGL). The span at 430-448 (RMMSNYRNDSSSSLGSGST) shows a compositional bias: low complexity. A compositionally biased stretch (polar residues) spans 519-537 (PSGNMKTQRRGSQPSTPRL). 2 positions are modified to phosphoserine: serine 530 and serine 538. The segment covering 544 to 555 (SIEHPLARRVRS) has biased composition (basic and acidic residues). Residues 601–641 (CVICFENEVIAALVPCGHNLFCMECANKICEKRTPSCPVCQ) form an RING-type zinc finger.

As to quaternary structure, interacts with USP7, which antagonizes the ability to degrade mRNA. Phosphorylated.

The protein localises to the nucleus. Its subcellular location is the cytoplasm. It catalyses the reaction S-ubiquitinyl-[E2 ubiquitin-conjugating enzyme]-L-cysteine + [acceptor protein]-L-lysine = [E2 ubiquitin-conjugating enzyme]-L-cysteine + N(6)-ubiquitinyl-[acceptor protein]-L-lysine.. In terms of biological role, RNA-binding protein. May be involved in post-transcriptional regulatory mechanisms, modulating levels of some mRNAs by promoting their degradation in a way involving ubiquitin ligase activity. May act as suppressor of replication stress and chromosome missegregation. This is RNA-binding E3 ubiquitin-protein ligase MEX3C (Mex3c) from Mus musculus (Mouse).